The chain runs to 159 residues: UPF0262 protein RD1_1069 (159 aa).

The protein belongs to the UPF0262 family.

This is UPF0262 protein RD1_1069 from Roseobacter denitrificans (strain ATCC 33942 / OCh 114) (Erythrobacter sp. (strain OCh 114)).